Reading from the N-terminus, the 474-residue chain is Polyamine oxidase 7 (474 aa).

Residues 1-27 (MTKPTTMAIFLSIVLLSMAQLPSLVAG) form the signal peptide. Positions 61 and 69 each coordinate FAD. N-linked (GlcNAc...) asparagine glycosylation is found at N103 and N150. V261 is an FAD binding site. An N-linked (GlcNAc...) asparagine glycan is attached at N278. FAD is bound at residue E454.

The protein belongs to the flavin monoamine oxidase family. It depends on FAD as a cofactor.

It is found in the secreted. The protein localises to the extracellular space. It localises to the apoplast. The enzyme catalyses spermine + O2 + H2O = 3-aminopropanal + spermidine + H2O2. It catalyses the reaction N(1)-acetylspermine + O2 + H2O = 3-acetamidopropanal + spermidine + H2O2. It carries out the reaction norspermine + O2 + H2O = norspermidine + 3-aminopropanal + H2O2. The catalysed reaction is spermidine + O2 + H2O = 3-aminopropanal + putrescine + H2O2. The enzyme catalyses N(1)-acetylspermidine + O2 + H2O = 3-acetamidopropanal + putrescine + H2O2. It catalyses the reaction thermospermine + O2 + H2O = 3-aminopropanal + spermidine + H2O2. Its pathway is amine and polyamine degradation; spermidine degradation. It functions in the pathway amine and polyamine degradation; spermine degradation. In terms of biological role, flavoenzyme involved in polyamine back-conversion. Catalyzes the oxidation of the secondary amino group of polyamines, such as spermine, spermidine and their acetyl derivatives. Substrate preference is spermine &gt; spermidine &gt; N(1)-acetylspermine &gt; N(1)-acetylspermidine &gt; norspermine &gt; thermospermine. No activity detected when putrescine is used as substrate. May play a role in producing hydrogen peroxide for secondary wall thickening through lignin formation during anther development. This chain is Polyamine oxidase 7, found in Oryza sativa subsp. japonica (Rice).